Here is a 156-residue protein sequence, read N- to C-terminus: Small ribosomal subunit protein uS7 (156 aa).

Belongs to the universal ribosomal protein uS7 family. Part of the 30S ribosomal subunit. Contacts proteins S9 and S11.

Its function is as follows. One of the primary rRNA binding proteins, it binds directly to 16S rRNA where it nucleates assembly of the head domain of the 30S subunit. Is located at the subunit interface close to the decoding center, probably blocks exit of the E-site tRNA. This chain is Small ribosomal subunit protein uS7, found in Edwardsiella ictaluri (strain 93-146).